A 370-amino-acid chain; its full sequence is Dual-specificity RNA methyltransferase RlmN (370 aa).

The active-site Proton acceptor is the Glu93. The region spanning 99–337 (EEGRGTLCVS…VTTVRKTRGD (239 aa)) is the Radical SAM core domain. An intrachain disulfide couples Cys106 to Cys343. [4Fe-4S] cluster contacts are provided by Cys113, Cys117, and Cys120. S-adenosyl-L-methionine is bound by residues 167–168 (GE), Ser199, 221–223 (SLH), and Asn300. Cys343 (S-methylcysteine intermediate) is an active-site residue.

The protein belongs to the radical SAM superfamily. RlmN family. It depends on [4Fe-4S] cluster as a cofactor.

The protein resides in the cytoplasm. It carries out the reaction adenosine(2503) in 23S rRNA + 2 reduced [2Fe-2S]-[ferredoxin] + 2 S-adenosyl-L-methionine = 2-methyladenosine(2503) in 23S rRNA + 5'-deoxyadenosine + L-methionine + 2 oxidized [2Fe-2S]-[ferredoxin] + S-adenosyl-L-homocysteine. The enzyme catalyses adenosine(37) in tRNA + 2 reduced [2Fe-2S]-[ferredoxin] + 2 S-adenosyl-L-methionine = 2-methyladenosine(37) in tRNA + 5'-deoxyadenosine + L-methionine + 2 oxidized [2Fe-2S]-[ferredoxin] + S-adenosyl-L-homocysteine. In terms of biological role, specifically methylates position 2 of adenine 2503 in 23S rRNA and position 2 of adenine 37 in tRNAs. m2A2503 modification seems to play a crucial role in the proofreading step occurring at the peptidyl transferase center and thus would serve to optimize ribosomal fidelity. In Francisella tularensis subsp. holarctica (strain LVS), this protein is Dual-specificity RNA methyltransferase RlmN.